We begin with the raw amino-acid sequence, 209 residues long: High frequency lysogenization protein HflD homolog (209 aa).

Residues 79 to 121 (QGLNAELTRYTLSLMVLERKLNSAKGAMDTLGDRIAGLQRQLD) are a coiled coil.

This sequence belongs to the HflD family.

The protein resides in the cytoplasm. It is found in the cell inner membrane. The chain is High frequency lysogenization protein HflD homolog from Enterobacter sp. (strain 638).